Reading from the N-terminus, the 247-residue chain is Sensory rhodopsin-1 (247 aa).

Over 1–4 (MTGA) the chain is Extracellular. Residues 5–26 (VSAAYWIAAVAFLVGLGITAAL) traverse the membrane as a helical segment. Residues 27–35 (YAKLGESED) are Cytoplasmic-facing. A helical transmembrane segment spans residues 36 to 57 (RGRLAALAVIPGFAGLAYAGMA). The Extracellular segment spans residues 58-71 (LGIGTVTVNGAELV). A helical transmembrane segment spans residues 72–93 (GLRYVDWIVTTPLLVGFIGYVA). The Cytoplasmic portion of the chain corresponds to 94–96 (GAS). A helical transmembrane segment spans residues 97–119 (RRAIAGVMLADALMIAFGAGAVV). Residues 120-123 (TGGT) are Extracellular-facing. Residues 124-151 (LKWVLFGVSSIFHVTLFAYLYVVFPRAV) traverse the membrane as a helical segment. The Cytoplasmic portion of the chain corresponds to 152–154 (PDD). A helical membrane pass occupies residues 155 to 182 (PMQRGLFSLLKNHVGLLWLAYPFVWLMG). Topologically, residues 183-190 (PAGIGFTT) are extracellular. The chain crosses the membrane as a helical span at residues 191–223 (GVGAALTYAFLDVLAKVPYVYFFYARRQAFTDV). Lysine 206 is modified (N6-(retinylidene)lysine). At 224–247 (VSAATADREDATDAVGDGAPTAAD) the chain is on the cytoplasmic side.

It belongs to the archaeal/bacterial/fungal opsin family. In terms of assembly, interacts with HTR-I.

It localises to the cell membrane. Functionally, involved in the control of phototaxis. Mediates both photoattractant (in the orange light) and photophobic (in the near UV light) responses. The signal is then transmitted to the sensory rhodopsin I transducer (HTR-I). In Halobacterium sp. (strain SG1), this protein is Sensory rhodopsin-1 (sop1).